The chain runs to 441 residues: Ribosomal protein uS12 methylthiotransferase RimO (441 aa).

An MTTase N-terminal domain is found at 8 to 118 (PKIGFVSLGC…VLEHVHHYTP (111 aa)). 6 residues coordinate [4Fe-4S] cluster: Cys17, Cys53, Cys82, Cys150, Cys154, and Cys157. One can recognise a Radical SAM core domain in the interval 136 to 373 (LTPRHYAYLK…MQLQQQISAE (238 aa)). One can recognise a TRAM domain in the interval 376–441 (QEKVGREILV…DEYDLWGTRV (66 aa)).

The protein belongs to the methylthiotransferase family. RimO subfamily. It depends on [4Fe-4S] cluster as a cofactor.

It localises to the cytoplasm. It carries out the reaction L-aspartate(89)-[ribosomal protein uS12]-hydrogen + (sulfur carrier)-SH + AH2 + 2 S-adenosyl-L-methionine = 3-methylsulfanyl-L-aspartate(89)-[ribosomal protein uS12]-hydrogen + (sulfur carrier)-H + 5'-deoxyadenosine + L-methionine + A + S-adenosyl-L-homocysteine + 2 H(+). Its function is as follows. Catalyzes the methylthiolation of an aspartic acid residue of ribosomal protein uS12. This is Ribosomal protein uS12 methylthiotransferase RimO from Klebsiella pneumoniae subsp. pneumoniae (strain ATCC 700721 / MGH 78578).